A 126-amino-acid chain; its full sequence is Glycine cleavage system H protein (126 aa).

Residues 22–104 form the Lipoyl-binding domain; that stretch reads KAYIGITSFA…YEQAWMIVVE (83 aa). Residue K63 is modified to N6-lipoyllysine.

It belongs to the GcvH family. In terms of assembly, the glycine cleavage system is composed of four proteins: P, T, L and H. The cofactor is (R)-lipoate.

Its function is as follows. The glycine cleavage system catalyzes the degradation of glycine. The H protein shuttles the methylamine group of glycine from the P protein to the T protein. In terms of biological role, is also involved in protein lipoylation via its role as an octanoyl/lipoyl carrier protein intermediate. In Brevibacillus brevis (strain 47 / JCM 6285 / NBRC 100599), this protein is Glycine cleavage system H protein.